We begin with the raw amino-acid sequence, 200 residues long: ATP-dependent Clp protease proteolytic subunit 2 (200 aa).

The active-site Nucleophile is Ser-101. His-126 is an active-site residue.

The protein belongs to the peptidase S14 family. As to quaternary structure, fourteen ClpP subunits assemble into 2 heptameric rings which stack back to back to give a disk-like structure with a central cavity, resembling the structure of eukaryotic proteasomes.

The protein resides in the cytoplasm. The catalysed reaction is Hydrolysis of proteins to small peptides in the presence of ATP and magnesium. alpha-casein is the usual test substrate. In the absence of ATP, only oligopeptides shorter than five residues are hydrolyzed (such as succinyl-Leu-Tyr-|-NHMec, and Leu-Tyr-Leu-|-Tyr-Trp, in which cleavage of the -Tyr-|-Leu- and -Tyr-|-Trp bonds also occurs).. Its function is as follows. Cleaves peptides in various proteins in a process that requires ATP hydrolysis. Has a chymotrypsin-like activity. Plays a major role in the degradation of misfolded proteins. This chain is ATP-dependent Clp protease proteolytic subunit 2, found in Prochlorococcus marinus (strain NATL2A).